A 382-amino-acid polypeptide reads, in one-letter code: Sialidase (382 aa).

A substrate-binding site is contributed by arginine 37. Aspartate 62 (proton acceptor) is an active-site residue. 3 BNR repeats span residues 71 to 82 (ARSTDFGKTWSY), 140 to 151 (IYSDDNGLTWSN), and 208 to 219 (IYSKDNGETWTM). Arginine 245 provides a ligand contact to substrate. Residues 255–266 (YISHDLGTTWEI) form a BNR 4 repeat. The Nucleophile role is filled by tyrosine 347.

The protein belongs to the glycosyl hydrolase 33 family.

Its subcellular location is the secreted. It carries out the reaction Hydrolysis of alpha-(2-&gt;3)-, alpha-(2-&gt;6)-, alpha-(2-&gt;8)- glycosidic linkages of terminal sialic acid residues in oligosaccharides, glycoproteins, glycolipids, colominic acid and synthetic substrates.. Sialidases have been suggested to be pathogenic factors in microbial infections. The polypeptide is Sialidase (nanH) (Clostridium perfringens).